The primary structure comprises 104 residues: Defensin-2 (104 aa).

Residues 1–19 (MKFFVLFAILIAIVHASCA) form the signal peptide. 3 disulfides stabilise this stretch: Cys-64–Cys-95, Cys-81–Cys-100, and Cys-85–Cys-102.

It belongs to the invertebrate defensin family. Type 1 subfamily. In terms of tissue distribution, low expression in head and thorax.

The protein localises to the secreted. Its function is as follows. Antibacterial peptide mostly active against Gram-positive bacteria. In Apis mellifera (Honeybee), this protein is Defensin-2.